Here is a 230-residue protein sequence, read N- to C-terminus: Heptaprenylglyceryl phosphate synthase (230 aa).

Residue Lys12 coordinates sn-glycerol 1-phosphate. Mg(2+)-binding residues include Asp14 and Thr40. Sn-glycerol 1-phosphate-binding positions include 159 to 164 (YVEYSG), Gly189, and 209 to 210 (GD).

Belongs to the GGGP/HepGP synthase family. Group I subfamily. Homodimer. Mg(2+) is required as a cofactor.

The enzyme catalyses sn-glycerol 1-phosphate + all-trans-heptaprenyl diphosphate = 3-heptaprenyl-sn-glycero-1-phosphate + diphosphate. It functions in the pathway membrane lipid metabolism; glycerophospholipid metabolism. Functionally, prenyltransferase that catalyzes in vivo the transfer of the heptaprenyl moiety of heptaprenyl pyrophosphate (HepPP; 35 carbon atoms) to the C3 hydroxyl of sn-glycerol-1-phosphate (G1P), producing heptaprenylglyceryl phosphate (HepGP). This reaction is an ether-bond-formation step in the biosynthesis of archaea-type G1P-based membrane lipids found in Bacillales. In Staphylococcus epidermidis (strain ATCC 35984 / DSM 28319 / BCRC 17069 / CCUG 31568 / BM 3577 / RP62A), this protein is Heptaprenylglyceryl phosphate synthase.